Reading from the N-terminus, the 247-residue chain is Probable transcriptional regulatory protein Dvul_0986 (247 aa).

A disordered region spans residues 1–22 (MAGHSKWANIQHRKGRQDAKRG).

This sequence belongs to the TACO1 family.

The protein localises to the cytoplasm. This is Probable transcriptional regulatory protein Dvul_0986 from Nitratidesulfovibrio vulgaris (strain DP4) (Desulfovibrio vulgaris).